The sequence spans 315 residues: Protoheme IX farnesyltransferase (315 aa).

9 helical membrane passes run 34 to 54, 55 to 75, 105 to 125, 127 to 147, 155 to 175, 177 to 197, 226 to 246, 251 to 271, and 294 to 314; these read VISLVVFTGAAGLAMAPGPIN, PLIAAVSILCICMASGAAGAI, ALGFGIGLSVASVLLMWLAAN, LAAFILAFSIFFYAVIYTMWL, IVIGGAAGAFPPMIGWAATTG, LGVLPVVMFAIVFLWTPPHFW, WQILFYTLILSAVSLVPSFLH, LYTGVASLLDAGFVACAVGVL, and YSLAYLFLLFCGLLADHFLIM.

The protein belongs to the UbiA prenyltransferase family. Protoheme IX farnesyltransferase subfamily.

The protein localises to the cell inner membrane. It catalyses the reaction heme b + (2E,6E)-farnesyl diphosphate + H2O = Fe(II)-heme o + diphosphate. It participates in porphyrin-containing compound metabolism; heme O biosynthesis; heme O from protoheme: step 1/1. In terms of biological role, converts heme B (protoheme IX) to heme O by substitution of the vinyl group on carbon 2 of heme B porphyrin ring with a hydroxyethyl farnesyl side group. This is Protoheme IX farnesyltransferase from Gluconacetobacter diazotrophicus (strain ATCC 49037 / DSM 5601 / CCUG 37298 / CIP 103539 / LMG 7603 / PAl5).